A 125-amino-acid polypeptide reads, in one-letter code: Fluoride-specific ion channel FluC (125 aa).

A run of 4 helical transmembrane segments spans residues 1–21 (MIQA…RYFV), 32–52 (AFPW…GVFA), 68–88 (LLIT…LDAI), and 101–121 (IYIA…LAIM). The Na(+) site is built by glycine 75 and threonine 78.

This sequence belongs to the fluoride channel Fluc/FEX (TC 1.A.43) family.

The protein localises to the cell inner membrane. It catalyses the reaction fluoride(in) = fluoride(out). Na(+) is not transported, but it plays an essential structural role and its presence is essential for fluoride channel function. Fluoride-specific ion channel. Important for reducing fluoride concentration in the cell, thus reducing its toxicity. This is Fluoride-specific ion channel FluC from Rhizobium etli (strain ATCC 51251 / DSM 11541 / JCM 21823 / NBRC 15573 / CFN 42).